The chain runs to 372 residues: N-methyl-L-tryptophan oxidase (372 aa).

4–34 serves as a coordination point for FAD; the sequence is DLIIIGSGSVGAAAGYYATRAGLKVLMTDAH. At cysteine 307 the chain carries S-8alpha-FAD cysteine.

The protein belongs to the MSOX/MTOX family. MTOX subfamily. Monomer. FAD is required as a cofactor.

The enzyme catalyses N(alpha)-methyl-L-tryptophan + O2 + H2O = L-tryptophan + formaldehyde + H2O2. In terms of biological role, catalyzes the oxidative demethylation of N-methyl-L-tryptophan. The sequence is that of N-methyl-L-tryptophan oxidase from Salmonella heidelberg (strain SL476).